The sequence spans 155 residues: Protein Smg homolog (155 aa).

This sequence belongs to the Smg family.

This is Protein Smg homolog from Azoarcus sp. (strain BH72).